The primary structure comprises 505 residues: DEAD-box ATP-dependent RNA helicase 41 (505 aa).

The HIT-type zinc-finger motif lies at 27–56; it reads GEPKCVICSRYGEYICDETNDDVCSLECKQ. The short motif at 110-138 is the Q motif element; the sequence is LTFTSCGLPPKLLLNLETAGYDFPTPIQM. The Helicase ATP-binding domain maps to 141-318; the sequence is IPAALTGKSL…GSLAKEIILV (178 aa). 154–161 serves as a coordination point for ATP; it reads ADTGSGKT. The DEAD box motif lies at 267-270; the sequence is DEVD. Residues 342-492 enclose the Helicase C-terminal domain; the sequence is KKQKLFDILR…AIPKELINLT (151 aa).

It belongs to the DEAD box helicase family. DDX59 subfamily.

The enzyme catalyses ATP + H2O = ADP + phosphate + H(+). In Arabidopsis thaliana (Mouse-ear cress), this protein is DEAD-box ATP-dependent RNA helicase 41 (RH41).